Here is a 388-residue protein sequence, read N- to C-terminus: MTNINRIGLTWISFLSYAFTGALVVVTGMIMGNISNYFHLSISQMSNIFTFLNAGILVSIFINSWLIEIISLKKQLIFSFILTIIAVIGIVLCNSIFLFSINMFILGLVSGITMSIGTFIITHLYSGSKRGSLLLLTDSFFSMSGMIFPIVTAYLLEKKIIWYWSYICIGAIYLLIFLLTINSSFEKFKTNTKNSKETKEKWNFNVFLLSISALLYILGQLGFISWVPQYATEIMNIDIKKTGSLVSGFWMSYMLGMWFFSFIIKFFNLYRMFIFLTSMSTILMYCFIKSENFLNQQYIIISLGFFSSAIYTIIITLASLQTKHPSPKLINLILLFGTIGTFLTFIITSPIVEAKGLYVTLISSNILYGIVFFLSILIYFNKKYEGVI.

Transmembrane regions (helical) follow at residues 11–31, 50–70, 77–97, 101–121, 133–153, 160–180, 206–226, 244–264, 268–288, 298–318, 332–352, and 360–380; these read WISFLSYAFTGALVVVTGMIM, TFLNAGILVSIFINSWLIEII, IFSFILTIIAVIGIVLCNSIF, INMFILGLVSGITMSIGTFII, LLLLTDSFFSMSGMIFPIVTA, IIWYWSYICIGAIYLLIFLLT, VFLLSISALLYILGQLGFISW, SLVSGFWMSYMLGMWFFSFII, NLYRMFIFLTSMSTILMYCFI, YIIISLGFFSSAIYTIIITLA, LILLFGTIGTFLTFIITSPIV, and TLISSNILYGIVFFLSILIYF.

This sequence belongs to the major facilitator superfamily. TsgA family.

It is found in the cell membrane. The sequence is that of Protein TsgA homolog from Buchnera aphidicola subsp. Acyrthosiphon pisum (strain Tuc7).